The sequence spans 648 residues: Forkhead box protein N1 (648 aa).

The segment at Met-1 to Pro-95 is disordered. Residues Ala-38 to Ser-50 are compositionally biased toward polar residues. Pro residues predominate over residues Asp-54–Ser-67. Residues Lys-271 to Asp-367 constitute a DNA-binding region (fork-head). 3 disordered regions span residues Leu-392–Pro-432, His-457–Pro-521, and Ser-629–Ala-648. Pro residues predominate over residues Gly-398–Pro-412.

As to expression, bone marrow (at protein level). Expressed in thymus and skin.

The protein localises to the nucleus. Its function is as follows. Transcriptional regulator which regulates the development, differentiation, and function of thymic epithelial cells (TECs) both in the prenatal and postnatal thymus. Acts as a master regulator of the TECs lineage development and is required from the onset of differentiation in progenitor TECs in the developing fetus to the final differentiation steps through which TECs mature to acquire their full functionality. Regulates, either directly or indirectly the expression of a variety of genes that mediate diverse aspects of thymus development and function, including MHC Class II, DLL4, CCL25, CTSL, CD40 and PAX1. Regulates the differentiation of the immature TECs into functional cortical TECs (cTECs) and medullary TECs (mTECs). Essential for maintenance of mTECs population in the postnatal thymus. Involved in the morphogenesis and maintenance of the three-dimensional thymic microstructure which is necessary for a fully functional thymus. Plays an important role in the maintenance of hematopoiesis and particularly T lineage progenitors within the bone marrow niche with age. Essential for the vascularization of the thymus anlage. Promotes the terminal differentiation of epithelial cells in the epidermis and hair follicles, partly by negatively regulating the activity of protein kinase C. This Mus musculus (Mouse) protein is Forkhead box protein N1 (Foxn1).